Here is a 278-residue protein sequence, read N- to C-terminus: Large ribosomal subunit protein uL2 (278 aa).

A disordered region spans residues Ala208 to Lys278. The segment covering Gly209–Gln219 has biased composition (basic residues). Basic and acidic residues predominate over residues Lys258–Ile270.

This sequence belongs to the universal ribosomal protein uL2 family. Part of the 50S ribosomal subunit. Forms a bridge to the 30S subunit in the 70S ribosome.

Functionally, one of the primary rRNA binding proteins. Required for association of the 30S and 50S subunits to form the 70S ribosome, for tRNA binding and peptide bond formation. It has been suggested to have peptidyltransferase activity; this is somewhat controversial. Makes several contacts with the 16S rRNA in the 70S ribosome. The sequence is that of Large ribosomal subunit protein uL2 from Lactobacillus delbrueckii subsp. bulgaricus (strain ATCC 11842 / DSM 20081 / BCRC 10696 / JCM 1002 / NBRC 13953 / NCIMB 11778 / NCTC 12712 / WDCM 00102 / Lb 14).